The primary structure comprises 154 residues: Myoglobin (154 aa).

Positions 2–148 constitute a Globin domain; that stretch reads GLSDGEWQLV…FRKDIAAKYK (147 aa). Residue S4 is modified to Phosphoserine. H65 lines the nitrite pocket. An O2-binding site is contributed by H65. T68 is subject to Phosphothreonine. H94 is a heme b binding site.

This sequence belongs to the globin family. In terms of assembly, monomeric.

The protein resides in the cytoplasm. It localises to the sarcoplasm. It carries out the reaction Fe(III)-heme b-[protein] + nitric oxide + H2O = Fe(II)-heme b-[protein] + nitrite + 2 H(+). It catalyses the reaction H2O2 + AH2 = A + 2 H2O. Functionally, monomeric heme protein which primary function is to store oxygen and facilitate its diffusion within muscle tissues. Reversibly binds oxygen through a pentacoordinated heme iron and enables its timely and efficient release as needed during periods of heightened demand. Depending on the oxidative conditions of tissues and cells, and in addition to its ability to bind oxygen, it also has a nitrite reductase activity whereby it regulates the production of bioactive nitric oxide. Under stress conditions, like hypoxia and anoxia, it also protects cells against reactive oxygen species thanks to its pseudoperoxidase activity. The chain is Myoglobin (MB) from Globicephala melas (Long-finned pilot whale).